The chain runs to 119 residues: Parathyroid hormone (119 aa).

The first 25 residues, 1–25 (MTSTKNLAKAIVILYAICFFTNSDG), serve as a signal peptide directing secretion. Positions 26–31 (RPMMKR) are excised as a propeptide.

This sequence belongs to the parathyroid hormone family. In terms of assembly, interacts with PTH1R (via N-terminal extracellular domain).

It localises to the secreted. Its function is as follows. Parathyroid hormone elevates calcium level by dissolving the salts in bone and preventing their renal excretion. Acts by binding to its receptor, PTH1R, activating G protein-coupled receptor signaling. Stimulates [1-14C]-2-deoxy-D-glucose (2DG) transport and glycogen synthesis in osteoblastic cells. The protein is Parathyroid hormone of Gallus gallus (Chicken).